A 276-amino-acid polypeptide reads, in one-letter code: Probable endonuclease 4 (276 aa).

Positions 70, 108, 143, 176, 179, 210, 223, 225, and 255 each coordinate Zn(2+).

It belongs to the AP endonuclease 2 family. Zn(2+) serves as cofactor.

It carries out the reaction Endonucleolytic cleavage to 5'-phosphooligonucleotide end-products.. Functionally, endonuclease IV plays a role in DNA repair. It cleaves phosphodiester bonds at apurinic or apyrimidinic (AP) sites, generating a 3'-hydroxyl group and a 5'-terminal sugar phosphate. In Mesomycoplasma hyopneumoniae (strain J / ATCC 25934 / NCTC 10110) (Mycoplasma hyopneumoniae), this protein is Probable endonuclease 4.